A 301-amino-acid polypeptide reads, in one-letter code: NAD kinase (301 aa).

The Proton acceptor role is filled by Asp-73. NAD(+) contacts are provided by residues 73–74 (DG), 160–161 (NE), Arg-188, Asp-190, Ala-198, 201–206 (TAYNIS), Ala-225, and Gln-257.

Belongs to the NAD kinase family. A divalent metal cation is required as a cofactor.

It localises to the cytoplasm. The enzyme catalyses NAD(+) + ATP = ADP + NADP(+) + H(+). In terms of biological role, involved in the regulation of the intracellular balance of NAD and NADP, and is a key enzyme in the biosynthesis of NADP. Catalyzes specifically the phosphorylation on 2'-hydroxyl of the adenosine moiety of NAD to yield NADP. The chain is NAD kinase from Helicobacter hepaticus (strain ATCC 51449 / 3B1).